The chain runs to 195 residues: Phosphoheptose isomerase (195 aa).

The region spanning 36–195 is the SIS domain; sequence VSKVLQSGNT…IVEYNLFKME (160 aa). Residue 51-53 coordinates substrate; the sequence is NGG. The Zn(2+) site is built by His-60 and Glu-64. Residues Glu-64, 95 to 96, 121 to 123, Ser-126, and Gln-173 each bind substrate; these read ND and STS. Residues Gln-173 and His-181 each coordinate Zn(2+).

This sequence belongs to the SIS family. GmhA subfamily. Requires Zn(2+) as cofactor.

The protein localises to the cytoplasm. It catalyses the reaction 2 D-sedoheptulose 7-phosphate = D-glycero-alpha-D-manno-heptose 7-phosphate + D-glycero-beta-D-manno-heptose 7-phosphate. Its pathway is carbohydrate biosynthesis; D-glycero-D-manno-heptose 7-phosphate biosynthesis; D-glycero-alpha-D-manno-heptose 7-phosphate and D-glycero-beta-D-manno-heptose 7-phosphate from sedoheptulose 7-phosphate: step 1/1. Catalyzes the isomerization of sedoheptulose 7-phosphate in D-glycero-D-manno-heptose 7-phosphate. The chain is Phosphoheptose isomerase from Leptospira borgpetersenii serovar Hardjo-bovis (strain JB197).